The following is a 348-amino-acid chain: tRNA N6-adenosine threonylcarbamoyltransferase (348 aa).

Fe cation contacts are provided by His111 and His115. Substrate is bound by residues 134–138 (LVSGG), Asp167, Gly180, Asp184, and Asn280. Position 308 (Asp308) interacts with Fe cation.

Belongs to the KAE1 / TsaD family. Fe(2+) is required as a cofactor.

It is found in the cytoplasm. It carries out the reaction L-threonylcarbamoyladenylate + adenosine(37) in tRNA = N(6)-L-threonylcarbamoyladenosine(37) in tRNA + AMP + H(+). Required for the formation of a threonylcarbamoyl group on adenosine at position 37 (t(6)A37) in tRNAs that read codons beginning with adenine. Is involved in the transfer of the threonylcarbamoyl moiety of threonylcarbamoyl-AMP (TC-AMP) to the N6 group of A37, together with TsaE and TsaB. TsaD likely plays a direct catalytic role in this reaction. This Rippkaea orientalis (strain PCC 8801 / RF-1) (Cyanothece sp. (strain PCC 8801)) protein is tRNA N6-adenosine threonylcarbamoyltransferase.